A 75-amino-acid chain; its full sequence is Small ribosomal subunit protein bS18 (75 aa).

Belongs to the bacterial ribosomal protein bS18 family. In terms of assembly, part of the 30S ribosomal subunit. Forms a tight heterodimer with protein bS6.

In terms of biological role, binds as a heterodimer with protein bS6 to the central domain of the 16S rRNA, where it helps stabilize the platform of the 30S subunit. This is Small ribosomal subunit protein bS18 from Roseobacter denitrificans (strain ATCC 33942 / OCh 114) (Erythrobacter sp. (strain OCh 114)).